A 61-amino-acid polypeptide reads, in one-letter code: Sec-independent protein translocase protein TatA (61 aa).

A helical membrane pass occupies residues 1–21 (MFGIGMPELIVILVIVLVVFG).

This sequence belongs to the TatA/E family. In terms of assembly, the Tat system comprises two distinct complexes: a TatABC complex, containing multiple copies of TatA, TatB and TatC subunits, and a separate TatA complex, containing only TatA subunits. Substrates initially bind to the TatABC complex, which probably triggers association of the separate TatA complex to form the active translocon.

It localises to the cell inner membrane. Its function is as follows. Part of the twin-arginine translocation (Tat) system that transports large folded proteins containing a characteristic twin-arginine motif in their signal peptide across membranes. TatA could form the protein-conducting channel of the Tat system. This chain is Sec-independent protein translocase protein TatA, found in Geobacter metallireducens (strain ATCC 53774 / DSM 7210 / GS-15).